Here is a 503-residue protein sequence, read N- to C-terminus: Aspartyl/glutamyl-tRNA(Asn/Gln) amidotransferase subunit B (503 aa).

The protein belongs to the GatB/GatE family. GatB subfamily. Heterotrimer of A, B and C subunits.

The catalysed reaction is L-glutamyl-tRNA(Gln) + L-glutamine + ATP + H2O = L-glutaminyl-tRNA(Gln) + L-glutamate + ADP + phosphate + H(+). The enzyme catalyses L-aspartyl-tRNA(Asn) + L-glutamine + ATP + H2O = L-asparaginyl-tRNA(Asn) + L-glutamate + ADP + phosphate + 2 H(+). In terms of biological role, allows the formation of correctly charged Asn-tRNA(Asn) or Gln-tRNA(Gln) through the transamidation of misacylated Asp-tRNA(Asn) or Glu-tRNA(Gln) in organisms which lack either or both of asparaginyl-tRNA or glutaminyl-tRNA synthetases. The reaction takes place in the presence of glutamine and ATP through an activated phospho-Asp-tRNA(Asn) or phospho-Glu-tRNA(Gln). This Roseobacter denitrificans (strain ATCC 33942 / OCh 114) (Erythrobacter sp. (strain OCh 114)) protein is Aspartyl/glutamyl-tRNA(Asn/Gln) amidotransferase subunit B.